An 84-amino-acid chain; its full sequence is ORF8b protein (84 aa).

The SARS ORF8 Ig-like domain occupies 1–82 (MCLKILVRYN…RDVLVVLNKR (82 aa)). Cysteines 22 and 40 form a disulfide.

It is found in the host cytoplasm. It localises to the host nucleus. Its function is as follows. Non-structural protein which is dispensable for virus replication in cell culture. This Severe acute respiratory syndrome coronavirus (SARS-CoV) protein is ORF8b protein.